The chain runs to 162 residues: MQHLVLIGFMGSGKSSLAQELGLALKLEVLDTDMIISERVGLSVREIFEELGEDNFRMFEKNLIDELKTLKTPHVISTGGGIVMHENLKGLGTTFYLKMDFETLIKRLNQKEREKRPLLNNLTQAKELFEKRQALYEKNASFIIDARGGLNNSLKQVLQFIA.

11–16 (GSGKSS) lines the ATP pocket. Serine 15 is a binding site for Mg(2+). Substrate is bound by residues aspartate 33, arginine 57, and glycine 80. Positions 109–123 (NQKEREKRPLLNNLT) are LID domain. ATP is bound at residue arginine 116. Arginine 132 is a binding site for substrate.

The protein belongs to the shikimate kinase family. In terms of assembly, monomer. Requires Mg(2+) as cofactor.

It localises to the cytoplasm. It carries out the reaction shikimate + ATP = 3-phosphoshikimate + ADP + H(+). Its pathway is metabolic intermediate biosynthesis; chorismate biosynthesis; chorismate from D-erythrose 4-phosphate and phosphoenolpyruvate: step 5/7. Its function is as follows. Catalyzes the specific phosphorylation of the 3-hydroxyl group of shikimic acid using ATP as a cosubstrate. In Helicobacter pylori (strain ATCC 700392 / 26695) (Campylobacter pylori), this protein is Shikimate kinase (aroK).